The following is a 332-amino-acid chain: Phosphate acyltransferase (332 aa).

This sequence belongs to the PlsX family. In terms of assembly, homodimer. Probably interacts with PlsY.

It is found in the cytoplasm. The catalysed reaction is a fatty acyl-[ACP] + phosphate = an acyl phosphate + holo-[ACP]. It functions in the pathway lipid metabolism; phospholipid metabolism. Functionally, catalyzes the reversible formation of acyl-phosphate (acyl-PO(4)) from acyl-[acyl-carrier-protein] (acyl-ACP). This enzyme utilizes acyl-ACP as fatty acyl donor, but not acyl-CoA. In Clostridium novyi (strain NT), this protein is Phosphate acyltransferase.